The following is a 487-amino-acid chain: Kynureninase 1 (487 aa).

Residues Leu-149, Thr-150, 177 to 180 (FPSD), Ser-234, Asp-263, His-266, and Tyr-288 each bind pyridoxal 5'-phosphate. Lys-289 is subject to N6-(pyridoxal phosphate)lysine. Residues Trp-329 and Asn-357 each contribute to the pyridoxal 5'-phosphate site.

It belongs to the kynureninase family. In terms of assembly, homodimer. It depends on pyridoxal 5'-phosphate as a cofactor.

The protein localises to the cytoplasm. It catalyses the reaction L-kynurenine + H2O = anthranilate + L-alanine + H(+). It carries out the reaction 3-hydroxy-L-kynurenine + H2O = 3-hydroxyanthranilate + L-alanine + H(+). It participates in amino-acid degradation; L-kynurenine degradation; L-alanine and anthranilate from L-kynurenine: step 1/1. The protein operates within cofactor biosynthesis; NAD(+) biosynthesis; quinolinate from L-kynurenine: step 2/3. In terms of biological role, catalyzes the cleavage of L-kynurenine (L-Kyn) and L-3-hydroxykynurenine (L-3OHKyn) into anthranilic acid (AA) and 3-hydroxyanthranilic acid (3-OHAA), respectively. In Emericella nidulans (strain FGSC A4 / ATCC 38163 / CBS 112.46 / NRRL 194 / M139) (Aspergillus nidulans), this protein is Kynureninase 1 (bna5-1).